The primary structure comprises 588 residues: L-fucose isomerase (588 aa).

Catalysis depends on proton acceptor residues glutamate 335 and aspartate 359. Residues glutamate 335, aspartate 359, and histidine 525 each contribute to the Mn(2+) site.

This sequence belongs to the L-fucose isomerase family. Requires Mn(2+) as cofactor.

It is found in the cytoplasm. It catalyses the reaction L-fucose = L-fuculose. It functions in the pathway carbohydrate degradation; L-fucose degradation; L-lactaldehyde and glycerone phosphate from L-fucose: step 1/3. Converts the aldose L-fucose into the corresponding ketose L-fuculose. The chain is L-fucose isomerase from Streptococcus pneumoniae (strain Taiwan19F-14).